The chain runs to 132 residues: MIYGVGTDICDIRRIAATLQRRGDRFAERVLGPREIEVFRYRRAKVEARGLSYLATRFSAKEAFSKAIGLGLHQPMSWRSCEILNAPSGQPQIHLHGALADWFAQRRLIAHVSLTDETDYATSFVVVETQGL.

The Mg(2+) site is built by Asp8 and Glu62.

This sequence belongs to the P-Pant transferase superfamily. AcpS family. Mg(2+) is required as a cofactor.

It localises to the cytoplasm. The catalysed reaction is apo-[ACP] + CoA = holo-[ACP] + adenosine 3',5'-bisphosphate + H(+). In terms of biological role, transfers the 4'-phosphopantetheine moiety from coenzyme A to a Ser of acyl-carrier-protein. In Leptothrix cholodnii (strain ATCC 51168 / LMG 8142 / SP-6) (Leptothrix discophora (strain SP-6)), this protein is Holo-[acyl-carrier-protein] synthase.